Reading from the N-terminus, the 452-residue chain is Tol-Pal system protein TolB (452 aa).

The signal sequence occupies residues 1 to 31 (MCGVRRGMGVLLLFCAVALCAMPFVVRSVWG).

It belongs to the TolB family. As to quaternary structure, the Tol-Pal system is composed of five core proteins: the inner membrane proteins TolA, TolQ and TolR, the periplasmic protein TolB and the outer membrane protein Pal. They form a network linking the inner and outer membranes and the peptidoglycan layer.

It localises to the periplasm. In terms of biological role, part of the Tol-Pal system, which plays a role in outer membrane invagination during cell division and is important for maintaining outer membrane integrity. The chain is Tol-Pal system protein TolB from Syntrophus aciditrophicus (strain SB).